The following is a 68-amino-acid chain: P21 prophage-derived head-stabilizing protein (68 aa).

The protein belongs to the lambda phage gpW family.

This chain is P21 prophage-derived head-stabilizing protein, found in Escherichia coli O6:H1 (strain CFT073 / ATCC 700928 / UPEC).